The sequence spans 475 residues: Aspartyl/glutamyl-tRNA(Asn/Gln) amidotransferase subunit B (475 aa).

The protein belongs to the GatB/GatE family. GatB subfamily. In terms of assembly, heterotrimer of A, B and C subunits.

It catalyses the reaction L-glutamyl-tRNA(Gln) + L-glutamine + ATP + H2O = L-glutaminyl-tRNA(Gln) + L-glutamate + ADP + phosphate + H(+). The catalysed reaction is L-aspartyl-tRNA(Asn) + L-glutamine + ATP + H2O = L-asparaginyl-tRNA(Asn) + L-glutamate + ADP + phosphate + 2 H(+). Allows the formation of correctly charged Asn-tRNA(Asn) or Gln-tRNA(Gln) through the transamidation of misacylated Asp-tRNA(Asn) or Glu-tRNA(Gln) in organisms which lack either or both of asparaginyl-tRNA or glutaminyl-tRNA synthetases. The reaction takes place in the presence of glutamine and ATP through an activated phospho-Asp-tRNA(Asn) or phospho-Glu-tRNA(Gln). The polypeptide is Aspartyl/glutamyl-tRNA(Asn/Gln) amidotransferase subunit B (Trichlorobacter lovleyi (strain ATCC BAA-1151 / DSM 17278 / SZ) (Geobacter lovleyi)).